The chain runs to 913 residues: DNA mismatch repair protein MutS (913 aa).

Positions 18–50 (NNKQKEKTKIPEDLSLEDLKKESQKRPRQRKNS) are disordered. Residues 19–42 (NKQKEKTKIPEDLSLEDLKKESQK) are compositionally biased toward basic and acidic residues. 720 to 727 (GPNASGKS) contributes to the ATP binding site.

It belongs to the DNA mismatch repair MutS family.

This protein is involved in the repair of mismatches in DNA. It is possible that it carries out the mismatch recognition step. This protein has a weak ATPase activity. The chain is DNA mismatch repair protein MutS from Prochlorococcus marinus (strain MIT 9301).